A 198-amino-acid polypeptide reads, in one-letter code: Protein GrpE (198 aa).

Belongs to the GrpE family. In terms of assembly, homodimer.

It localises to the cytoplasm. Its function is as follows. Participates actively in the response to hyperosmotic and heat shock by preventing the aggregation of stress-denatured proteins, in association with DnaK and GrpE. It is the nucleotide exchange factor for DnaK and may function as a thermosensor. Unfolded proteins bind initially to DnaJ; upon interaction with the DnaJ-bound protein, DnaK hydrolyzes its bound ATP, resulting in the formation of a stable complex. GrpE releases ADP from DnaK; ATP binding to DnaK triggers the release of the substrate protein, thus completing the reaction cycle. Several rounds of ATP-dependent interactions between DnaJ, DnaK and GrpE are required for fully efficient folding. The chain is Protein GrpE from Lysinibacillus sphaericus (Bacillus sphaericus).